We begin with the raw amino-acid sequence, 117 residues long: Large ribosomal subunit protein uL18 (117 aa).

This sequence belongs to the universal ribosomal protein uL18 family. As to quaternary structure, part of the 50S ribosomal subunit; part of the 5S rRNA/L5/L18/L25 subcomplex. Contacts the 5S and 23S rRNAs.

Functionally, this is one of the proteins that bind and probably mediate the attachment of the 5S RNA into the large ribosomal subunit, where it forms part of the central protuberance. In Vibrio campbellii (strain ATCC BAA-1116), this protein is Large ribosomal subunit protein uL18.